A 287-amino-acid polypeptide reads, in one-letter code: Probable endonuclease 4 (287 aa).

Positions 69, 109, 144, 178, 181, 215, 228, 230, and 260 each coordinate Zn(2+).

Belongs to the AP endonuclease 2 family. Requires Zn(2+) as cofactor.

It carries out the reaction Endonucleolytic cleavage to 5'-phosphooligonucleotide end-products.. Endonuclease IV plays a role in DNA repair. It cleaves phosphodiester bonds at apurinic or apyrimidinic (AP) sites, generating a 3'-hydroxyl group and a 5'-terminal sugar phosphate. The polypeptide is Probable endonuclease 4 (Thermotoga petrophila (strain ATCC BAA-488 / DSM 13995 / JCM 10881 / RKU-1)).